A 412-amino-acid polypeptide reads, in one-letter code: CCA-adding enzyme (412 aa).

The ATP site is built by Ser-41 and Lys-44. CTP is bound by residues Ser-41 and Lys-44. Residues Asp-53, Asp-55, and Asp-106 each coordinate Mg(2+). His-129, Lys-149, and Tyr-158 together coordinate ATP. CTP-binding residues include His-129, Lys-149, and Tyr-158.

Belongs to the tRNA nucleotidyltransferase/poly(A) polymerase family. Archaeal CCA-adding enzyme subfamily. As to quaternary structure, homodimer. Mg(2+) is required as a cofactor.

It catalyses the reaction a tRNA precursor + 2 CTP + ATP = a tRNA with a 3' CCA end + 3 diphosphate. The enzyme catalyses a tRNA with a 3' CCA end + 2 CTP + ATP = a tRNA with a 3' CCACCA end + 3 diphosphate. Its function is as follows. Catalyzes the addition and repair of the essential 3'-terminal CCA sequence in tRNAs without using a nucleic acid template. Adds these three nucleotides in the order of C, C, and A to the tRNA nucleotide-73, using CTP and ATP as substrates and producing inorganic pyrophosphate. tRNA 3'-terminal CCA addition is required both for tRNA processing and repair. Also involved in tRNA surveillance by mediating tandem CCA addition to generate a CCACCA at the 3' terminus of unstable tRNAs. While stable tRNAs receive only 3'-terminal CCA, unstable tRNAs are marked with CCACCA and rapidly degraded. In Saccharolobus islandicus (strain M.16.27) (Sulfolobus islandicus), this protein is CCA-adding enzyme.